Consider the following 37-residue polypeptide: Large ribosomal subunit protein bL36 (37 aa).

Belongs to the bacterial ribosomal protein bL36 family.

This is Large ribosomal subunit protein bL36 from Clostridium perfringens (strain ATCC 13124 / DSM 756 / JCM 1290 / NCIMB 6125 / NCTC 8237 / Type A).